Here is a 219-residue protein sequence, read N- to C-terminus: Clathrin light chain (219 aa).

Residues 32–136 (AEITGGSASA…KKEELRQQSK (105 aa)) are disordered. The interval 96 to 158 (PPPSREEPEK…SISKTKLASR (63 aa)) is involved in binding clathrin heavy chain. The span at 99–136 (SREEPEKIRKWREEQKQRLEEKDIEEERKKEELRQQSK) shows a compositional bias: basic and acidic residues.

It belongs to the clathrin light chain family. In terms of assembly, clathrin coats are formed from molecules containing 3 heavy chains and 3 light chains.

It localises to the cytoplasmic vesicle membrane. It is found in the membrane. Its subcellular location is the coated pit. Clathrin is the major protein of the polyhedral coat of coated pits and vesicles. This Drosophila melanogaster (Fruit fly) protein is Clathrin light chain (Clc).